Here is a 330-residue protein sequence, read N- to C-terminus: Malate dehydrogenase (330 aa).

13 to 19 contacts NAD(+); it reads GAAGQIG. Substrate-binding residues include R94 and R100. NAD(+) contacts are provided by residues N107, Q114, and 131 to 133; that span reads VGN. Residues N133 and R164 each contribute to the substrate site. H189 (proton acceptor) is an active-site residue.

The protein belongs to the LDH/MDH superfamily. MDH type 2 family.

It carries out the reaction (S)-malate + NAD(+) = oxaloacetate + NADH + H(+). Catalyzes the reversible oxidation of malate to oxaloacetate. In Deinococcus radiodurans (strain ATCC 13939 / DSM 20539 / JCM 16871 / CCUG 27074 / LMG 4051 / NBRC 15346 / NCIMB 9279 / VKM B-1422 / R1), this protein is Malate dehydrogenase.